We begin with the raw amino-acid sequence, 414 residues long: Argininosuccinate synthase (414 aa).

ATP-binding positions include 9–17 (AYSGGLDTS) and Ala35. L-citrulline contacts are provided by Tyr86 and Ser91. 114–122 (SHGATGKGN) contributes to the ATP binding site. Residues Thr118, Asn122, and Asp123 each coordinate L-aspartate. Asn122 is an L-citrulline binding site. L-citrulline is bound by residues Arg126, Ser179, Ser188, Glu269, and Tyr281.

Belongs to the argininosuccinate synthase family. Homotetramer.

The protein resides in the cytoplasm. It localises to the cytosol. The catalysed reaction is L-citrulline + L-aspartate + ATP = 2-(N(omega)-L-arginino)succinate + AMP + diphosphate + H(+). Its pathway is amino-acid biosynthesis; L-arginine biosynthesis; L-arginine from L-ornithine and carbamoyl phosphate: step 2/3. The protein operates within nitrogen metabolism; urea cycle; (N(omega)-L-arginino)succinate from L-aspartate and L-citrulline: step 1/1. Functionally, one of the enzymes of the urea cycle, the metabolic pathway transforming neurotoxic amonia produced by protein catabolism into inocuous urea in the liver of ureotelic animals. Catalyzes the formation of arginosuccinate from aspartate, citrulline and ATP and together with ASL it is responsible for the biosynthesis of arginine in most body tissues. The polypeptide is Argininosuccinate synthase (Danio rerio (Zebrafish)).